A 120-amino-acid chain; its full sequence is Ribonuclease P protein component (120 aa).

This sequence belongs to the RnpA family. In terms of assembly, consists of a catalytic RNA component (M1 or rnpB) and a protein subunit.

The enzyme catalyses Endonucleolytic cleavage of RNA, removing 5'-extranucleotides from tRNA precursor.. Its function is as follows. RNaseP catalyzes the removal of the 5'-leader sequence from pre-tRNA to produce the mature 5'-terminus. It can also cleave other RNA substrates such as 4.5S RNA. The protein component plays an auxiliary but essential role in vivo by binding to the 5'-leader sequence and broadening the substrate specificity of the ribozyme. This is Ribonuclease P protein component from Desulfotalea psychrophila (strain LSv54 / DSM 12343).